We begin with the raw amino-acid sequence, 609 residues long: Pescadillo homolog (609 aa).

The BRCT domain maps to 320–413 (KLKNLFKGLK…KLLPTNKYFI (94 aa)). Disordered regions lie at residues 443–462 (DEFEKQERAEGISDDEDEDF) and 488–609 (ALNS…EILA). 2 stretches are compositionally biased toward basic and acidic residues: residues 444 to 453 (EFEKQERAEG) and 488 to 498 (ALNSGEAKKEQ). A coiled-coil region spans residues 481–509 (FREEKAEALNSGEAKKEQAEEDNEDDDQE). Acidic residues predominate over residues 499-512 (AEEDNEDDDQEPDQ). 2 stretches are compositionally biased toward basic and acidic residues: residues 513-524 (DETKKQRSEKKQ) and 533-552 (VFKENPKEQKQLTKQEEALR). A coiled-coil region spans residues 539–607 (KEQKQLTKQE…QKRKAQRKEI (69 aa)). Residues 554–564 (KMVKSRHKKLY) are compositionally biased toward basic residues. The segment covering 567 to 609 (LLDKQKKATKEANLLREKRQQIDKQKRKEQTQKRKAQRKEILA) has biased composition (basic and acidic residues).

This sequence belongs to the pescadillo family.

Its subcellular location is the nucleus. The protein resides in the nucleolus. The protein localises to the nucleoplasm. Its function is as follows. Required for maturation of ribosomal RNAs and formation of the large ribosomal subunit. The chain is Pescadillo homolog from Aedes aegypti (Yellowfever mosquito).